A 99-amino-acid polypeptide reads, in one-letter code: Acylphosphatase (99 aa).

In terms of domain architecture, Acylphosphatase-like spans Ile5–Pro97. Catalysis depends on residues Arg20 and Asn38.

The protein belongs to the acylphosphatase family.

It catalyses the reaction an acyl phosphate + H2O = a carboxylate + phosphate + H(+). This is Acylphosphatase (acyP) from Bradyrhizobium diazoefficiens (strain JCM 10833 / BCRC 13528 / IAM 13628 / NBRC 14792 / USDA 110).